A 285-amino-acid chain; its full sequence is Small ribosomal subunit protein mS23 (285 aa).

The protein belongs to the mitochondrion-specific ribosomal protein mS23 family. As to quaternary structure, component of the mitochondrial small ribosomal subunit.

It is found in the mitochondrion. The sequence is that of Small ribosomal subunit protein mS23 (RSM25) from Debaryomyces hansenii (strain ATCC 36239 / CBS 767 / BCRC 21394 / JCM 1990 / NBRC 0083 / IGC 2968) (Yeast).